We begin with the raw amino-acid sequence, 362 residues long: 3-dehydroquinate synthase (362 aa).

NAD(+)-binding positions include 71 to 76 (DGEQYK), 105 to 109 (GVIGD), 129 to 130 (TT), K142, K151, and 169 to 172 (CLKT). Residues E184, H247, and H264 each contribute to the Zn(2+) site.

It belongs to the sugar phosphate cyclases superfamily. Dehydroquinate synthase family. Requires NAD(+) as cofactor. Co(2+) is required as a cofactor. The cofactor is Zn(2+).

Its subcellular location is the cytoplasm. The catalysed reaction is 7-phospho-2-dehydro-3-deoxy-D-arabino-heptonate = 3-dehydroquinate + phosphate. It participates in metabolic intermediate biosynthesis; chorismate biosynthesis; chorismate from D-erythrose 4-phosphate and phosphoenolpyruvate: step 2/7. Functionally, catalyzes the conversion of 3-deoxy-D-arabino-heptulosonate 7-phosphate (DAHP) to dehydroquinate (DHQ). The sequence is that of 3-dehydroquinate synthase from Salmonella typhi.